Here is a 627-residue protein sequence, read N- to C-terminus: Probable inactive L-type lectin-domain containing receptor kinase III.1 (627 aa).

An N-terminal signal peptide occupies residues 1-23 (MITFKSIALTIIFLSYFVSCVSS). Over 24–303 (QRETKFLNHG…STEKKSNNTM (280 aa)) the chain is Extracellular. Residues 26 to 262 (ETKFLNHGFL…SHFVLGWSFN (237 aa)) form a legume-lectin like region. Asn-57, Asn-78, Asn-127, Asn-184, Asn-202, Asn-209, and Asn-230 each carry an N-linked (GlcNAc...) asparagine glycan. A disordered region spans residues 272 to 297 (ITKLPSLPDPPPTLSPSPSPPVSTEK). The span at 278 to 292 (LPDPPPTLSPSPSPP) shows a compositional bias: pro residues. N-linked (GlcNAc...) asparagine glycosylation is present at Asn-300. Residues 304–324 (LIIIVAASATVALMILIFSGF) traverse the membrane as a helical segment. The Cytoplasmic portion of the chain corresponds to 325-627 (WFLRRDKIFF…PHDDYLFYGV (303 aa)). The region spanning 353-623 (FDNSKLLGER…TEALPHDDYL (271 aa)) is the Protein kinase domain. Residues 359 to 367 (LGERNSGSF) and Lys-381 contribute to the ATP site.

The protein in the C-terminal section; belongs to the protein kinase superfamily. Ser/Thr protein kinase family. It in the N-terminal section; belongs to the leguminous lectin family.

The protein localises to the cell membrane. The sequence is that of Probable inactive L-type lectin-domain containing receptor kinase III.1 (LECRK31) from Arabidopsis thaliana (Mouse-ear cress).